Consider the following 130-residue polypeptide: MYRAITRNIQVTATPRYVAERSEPDQGRHFWAYTVEVANLGQETVQLKGRHWVITDANGHTEEVHGAGVVGEEPTLPPGGRFEYTSGVPLNTSTGIMSGHYEMLADNGETFSIEIPAFSLDVPDVRRVLN.

The region spanning 3–127 is the ApaG domain; sequence RAITRNIQVT…FSLDVPDVRR (125 aa).

The polypeptide is Protein ApaG (Xanthobacter autotrophicus (strain ATCC BAA-1158 / Py2)).